A 371-amino-acid polypeptide reads, in one-letter code: Queuine tRNA-ribosyltransferase (371 aa).

Catalysis depends on aspartate 89, which acts as the Proton acceptor. Residues 89 to 93 (DSGGF), aspartate 143, glutamine 185, and glycine 212 contribute to the substrate site. Residues 243 to 249 (GVGKPED) are RNA binding. Aspartate 262 functions as the Nucleophile in the catalytic mechanism. The interval 267–271 (TRNAR) is RNA binding; important for wobble base 34 recognition. Residues cysteine 300, cysteine 302, cysteine 305, and histidine 331 each contribute to the Zn(2+) site.

The protein belongs to the queuine tRNA-ribosyltransferase family. Homodimer. Within each dimer, one monomer is responsible for RNA recognition and catalysis, while the other monomer binds to the replacement base PreQ1. It depends on Zn(2+) as a cofactor.

It catalyses the reaction 7-aminomethyl-7-carbaguanine + guanosine(34) in tRNA = 7-aminomethyl-7-carbaguanosine(34) in tRNA + guanine. It functions in the pathway tRNA modification; tRNA-queuosine biosynthesis. Its function is as follows. Catalyzes the base-exchange of a guanine (G) residue with the queuine precursor 7-aminomethyl-7-deazaguanine (PreQ1) at position 34 (anticodon wobble position) in tRNAs with GU(N) anticodons (tRNA-Asp, -Asn, -His and -Tyr). Catalysis occurs through a double-displacement mechanism. The nucleophile active site attacks the C1' of nucleotide 34 to detach the guanine base from the RNA, forming a covalent enzyme-RNA intermediate. The proton acceptor active site deprotonates the incoming PreQ1, allowing a nucleophilic attack on the C1' of the ribose to form the product. After dissociation, two additional enzymatic reactions on the tRNA convert PreQ1 to queuine (Q), resulting in the hypermodified nucleoside queuosine (7-(((4,5-cis-dihydroxy-2-cyclopenten-1-yl)amino)methyl)-7-deazaguanosine). The chain is Queuine tRNA-ribosyltransferase from Pseudomonas syringae pv. tomato (strain ATCC BAA-871 / DC3000).